Reading from the N-terminus, the 291-residue chain is N-acetylmannosamine kinase (291 aa).

Residues 5–12 (AIDIGGTK) and 132–139 (GVGGGVVC) each bind ATP. Positions 156, 166, 168, and 173 each coordinate Zn(2+).

The protein belongs to the ROK (NagC/XylR) family. NanK subfamily. In terms of assembly, homodimer.

The enzyme catalyses an N-acyl-D-mannosamine + ATP = an N-acyl-D-mannosamine 6-phosphate + ADP + H(+). It functions in the pathway amino-sugar metabolism; N-acetylneuraminate degradation; D-fructose 6-phosphate from N-acetylneuraminate: step 2/5. Functionally, catalyzes the phosphorylation of N-acetylmannosamine (ManNAc) to ManNAc-6-P. This chain is N-acetylmannosamine kinase, found in Salmonella paratyphi B (strain ATCC BAA-1250 / SPB7).